Consider the following 28-residue polypeptide: Omega-agatoxin-Aa2a (28 aa).

Belongs to the neurotoxin 04 (omega-agtx) family. 03 (type II/III omega-agtx) subfamily. As to expression, expressed by the venom gland.

It localises to the secreted. Omega-agatoxin are antagonist of voltage-gated calcium channels. They block insect neuromuscular transmission presynaptically. Potent blocker of N-type calcium channels (Cav2.2/CACNA1B). The protein is Omega-agatoxin-Aa2a of Agelenopsis aperta (North American funnel-web spider).